The following is a 167-amino-acid chain: Shikimate kinase (167 aa).

12-17 (GSGKTT) contributes to the ATP binding site. Threonine 16 contributes to the Mg(2+) binding site. Substrate contacts are provided by aspartate 34, arginine 58, and glycine 80. Arginine 117 lines the ATP pocket. Arginine 135 lines the substrate pocket. Residue arginine 152 coordinates ATP.

This sequence belongs to the shikimate kinase family. Monomer. Mg(2+) serves as cofactor.

The protein resides in the cytoplasm. The enzyme catalyses shikimate + ATP = 3-phosphoshikimate + ADP + H(+). The protein operates within metabolic intermediate biosynthesis; chorismate biosynthesis; chorismate from D-erythrose 4-phosphate and phosphoenolpyruvate: step 5/7. In terms of biological role, catalyzes the specific phosphorylation of the 3-hydroxyl group of shikimic acid using ATP as a cosubstrate. This Salinispora tropica (strain ATCC BAA-916 / DSM 44818 / JCM 13857 / NBRC 105044 / CNB-440) protein is Shikimate kinase.